The sequence spans 293 residues: Glutamyl-Q tRNA(Asp) synthetase (293 aa).

L-glutamate-binding positions include 8 to 12 (RFAPT) and Glu-44. The short motif at 11–21 (PTPSGYLHFGS) is the 'HIGH' region element. Residues Cys-100, Cys-102, Tyr-114, and Cys-118 each coordinate Zn(2+). Residues Tyr-171 and Arg-189 each coordinate L-glutamate. A 'KMSKS' region motif is present at residues 227–231 (KLGKS). Lys-230 is an ATP binding site.

The protein belongs to the class-I aminoacyl-tRNA synthetase family. GluQ subfamily. The cofactor is Zn(2+).

Functionally, catalyzes the tRNA-independent activation of glutamate in presence of ATP and the subsequent transfer of glutamate onto a tRNA(Asp). Glutamate is transferred on the 2-amino-5-(4,5-dihydroxy-2-cyclopenten-1-yl) moiety of the queuosine in the wobble position of the QUC anticodon. This Pseudomonas aeruginosa (strain LESB58) protein is Glutamyl-Q tRNA(Asp) synthetase.